The following is a 458-amino-acid chain: Ectonucleotide pyrophosphatase/phosphodiesterase family member 7 (458 aa).

A signal peptide spans 1-21; that stretch reads MRGPAVLLTVALATLLAPGAG. Residues 22-433 are Extracellular-facing; it reads APVQSQGSQN…RPTLLPKGRS (412 aa). Positions 39 and 75 each coordinate Zn(2+). The tract at residues 72–78 is required for enzyme activity; it reads VTMTSPC. The active-site Nucleophile is threonine 75. Substrate is bound at residue asparagine 96. N-linked (GlcNAc...) asparagine glycans are attached at residues asparagine 100, asparagine 121, asparagine 146, and asparagine 168. Zn(2+)-binding residues include aspartate 199, histidine 203, aspartate 246, and histidine 247. Residue asparagine 267 is glycosylated (N-linked (GlcNAc...) asparagine). A Zn(2+)-binding site is contributed by histidine 353. Residues 434-454 form a helical membrane-spanning segment; it reads ALPPSSRPLLVMGLLGTVILL. Residues 455–458 are Cytoplasmic-facing; the sequence is SEVA.

It belongs to the nucleotide pyrophosphatase/phosphodiesterase family. Requires Zn(2+) as cofactor. N-glycosylated; required for activity and transport to the plasma membrane. As to expression, detected in the colon (at protein level). Expressed in the duodenum, jejunum and liver and at low levels in the ileum. Expression was very low in the esophagus, stomach and colon.

It is found in the cell membrane. The catalysed reaction is a sphingomyelin + H2O = phosphocholine + an N-acylsphing-4-enine + H(+). The enzyme catalyses 1-hexadecanoyl-sn-glycero-3-phosphocholine + H2O = 1-hexadecanoyl-sn-glycerol + phosphocholine + H(+). It catalyses the reaction a 1-O-alkyl-2-acetyl-sn-glycero-3-phosphocholine + H2O = a 1-O-alkyl-2-acetyl-sn-glycerol + phosphocholine + H(+). It carries out the reaction 1-O-octadecyl-2-acetyl-sn-glycero-3-phosphocholine + H2O = 1-O-octadecyl-2-acetyl-sn-glycerol + phosphocholine + H(+). Inhibited in a dose dependent manner by ATP, imidazole, orthovanadate and zinc ion. Not inhibited by ADP, AMP and EDTA. Choline-specific phosphodiesterase that hydrolyzes sphingomyelin releasing the ceramide and phosphocholine and therefore is involved in sphingomyelin digestion, ceramide formation, and fatty acid (FA) absorption in the gastrointestinal tract. Also has phospholipase C activity and can also cleave phosphocholine from palmitoyl lyso-phosphatidylcholine and platelet-activating factor (PAF) leading to its inactivation. Does not have nucleotide pyrophosphatase activity. May promote cholesterol absorption by affecting the levels of sphingomyelin derived from either diet or endogenous sources, in the intestinal lumen. The protein is Ectonucleotide pyrophosphatase/phosphodiesterase family member 7 of Homo sapiens (Human).